A 610-amino-acid polypeptide reads, in one-letter code: V-type proton ATPase catalytic subunit A (610 aa).

245-252 (GAFGCGKT) is an ATP binding site.

Belongs to the ATPase alpha/beta chains family. As to quaternary structure, V-ATPase is a heteromultimeric enzyme composed of a peripheral catalytic V1 complex (main components: subunits A, B, C, D, E, and F) attached to an integral membrane V0 proton pore complex (main component: the proteolipid protein).

It carries out the reaction ATP + H2O + 4 H(+)(in) = ADP + phosphate + 5 H(+)(out). In terms of biological role, catalytic subunit of the peripheral V1 complex of vacuolar ATPase. V-ATPase vacuolar ATPase is responsible for acidifying a variety of intracellular compartments in eukaryotic cells. This Trypanosoma congolense protein is V-type proton ATPase catalytic subunit A.